A 158-amino-acid chain; its full sequence is 6,7-dimethyl-8-ribityllumazine synthase (158 aa).

5-amino-6-(D-ribitylamino)uracil is bound by residues phenylalanine 24, 58–60, and 82–84; these read AFE and AVI. 87–88 is a (2S)-2-hydroxy-3-oxobutyl phosphate binding site; sequence GT. The active-site Proton donor is histidine 90. Phenylalanine 115 lines the 5-amino-6-(D-ribitylamino)uracil pocket. Arginine 129 provides a ligand contact to (2S)-2-hydroxy-3-oxobutyl phosphate.

Belongs to the DMRL synthase family. As to quaternary structure, forms an icosahedral capsid composed of 60 subunits, arranged as a dodecamer of pentamers.

The enzyme catalyses (2S)-2-hydroxy-3-oxobutyl phosphate + 5-amino-6-(D-ribitylamino)uracil = 6,7-dimethyl-8-(1-D-ribityl)lumazine + phosphate + 2 H2O + H(+). It functions in the pathway cofactor biosynthesis; riboflavin biosynthesis; riboflavin from 2-hydroxy-3-oxobutyl phosphate and 5-amino-6-(D-ribitylamino)uracil: step 1/2. In terms of biological role, catalyzes the formation of 6,7-dimethyl-8-ribityllumazine by condensation of 5-amino-6-(D-ribitylamino)uracil with 3,4-dihydroxy-2-butanone 4-phosphate. This is the penultimate step in the biosynthesis of riboflavin. The sequence is that of 6,7-dimethyl-8-ribityllumazine synthase from Pseudomonas paraeruginosa (strain DSM 24068 / PA7) (Pseudomonas aeruginosa (strain PA7)).